Reading from the N-terminus, the 427-residue chain is Thymidine phosphorylase (427 aa).

It belongs to the thymidine/pyrimidine-nucleoside phosphorylase family. Homodimer.

The catalysed reaction is thymidine + phosphate = 2-deoxy-alpha-D-ribose 1-phosphate + thymine. In terms of biological role, the enzymes which catalyze the reversible phosphorolysis of pyrimidine nucleosides are involved in the degradation of these compounds and in their utilization as carbon and energy sources, or in the rescue of pyrimidine bases for nucleotide synthesis. This chain is Thymidine phosphorylase (deoA), found in Mycobacterium tuberculosis (strain CDC 1551 / Oshkosh).